A 544-amino-acid polypeptide reads, in one-letter code: D-2-hydroxyglutarate dehydrogenase, mitochondrial (544 aa).

Residues 1–10 constitute a mitochondrion transit peptide; sequence MMMPRLVPRW. The 180-residue stretch at 119–298 folds into the FAD-binding PCMH-type domain; that stretch reads VRGSSKVLLR…TAVSILCPPK (180 aa). Residue Lys124 is modified to N6-succinyllysine. 3 residues coordinate (R)-2-hydroxyglutarate: Arg409, Thr413, and Lys424. Position 409 (Arg409) interacts with (R)-lactate. The (R)-malate site is built by Arg409, Thr413, and Lys424. Positions 457 and 464 each coordinate Zn(2+). Residue Asn466 coordinates (R)-2-hydroxyglutarate. Residue Glu498 coordinates Zn(2+). His499 contributes to the (R)-2-hydroxyglutarate binding site. His499 contributes to the (R)-lactate binding site. His499 serves as a coordination point for (R)-malate.

It belongs to the FAD-binding oxidoreductase/transferase type 4 family. The cofactor is FAD.

Its subcellular location is the mitochondrion. The catalysed reaction is (R)-2-hydroxyglutarate + A = 2-oxoglutarate + AH2. It carries out the reaction (R)-malate + A = oxaloacetate + AH2. Activated by zinc and cobalt ions. Functionally, catalyzes the oxidation of D-2-hydroxyglutarate (D-2-HG) to alpha-ketoglutarate. Also catalyzes the oxidation of other D-2-hydroxyacids, such as D-malate (D-MAL) and D-lactate (D-LAC). Exhibits high activities towards D-2-HG and D-MAL but a very weak activity towards D-LAC. This Bos taurus (Bovine) protein is D-2-hydroxyglutarate dehydrogenase, mitochondrial (D2HGDH).